The following is a 1024-amino-acid chain: Beta-galactosidase (1024 aa).

Positions 103 and 202 each coordinate substrate. Asp202 is a binding site for Na(+). Mg(2+)-binding residues include Glu417, His419, and Glu462. Substrate is bound by residues Glu462 and 538-541 (EYAH). The active-site Proton donor is Glu462. The Nucleophile role is filled by Glu538. Residue Asn598 coordinates Mg(2+). The Na(+) site is built by Phe602 and Asn605. Substrate-binding residues include Asn605 and Trp1000.

The protein belongs to the glycosyl hydrolase 2 family. As to quaternary structure, homotetramer. It depends on Mg(2+) as a cofactor. Na(+) serves as cofactor.

It catalyses the reaction Hydrolysis of terminal non-reducing beta-D-galactose residues in beta-D-galactosides.. The polypeptide is Beta-galactosidase (Escherichia coli (strain SMS-3-5 / SECEC)).